A 156-amino-acid chain; its full sequence is Transcription antitermination protein NusB (156 aa).

It belongs to the NusB family.

Its function is as follows. Involved in transcription antitermination. Required for transcription of ribosomal RNA (rRNA) genes. Binds specifically to the boxA antiterminator sequence of the ribosomal RNA (rrn) operons. The chain is Transcription antitermination protein NusB from Rickettsia akari (strain Hartford).